A 961-amino-acid polypeptide reads, in one-letter code: Aconitate hydratase A (961 aa).

The [4Fe-4S] cluster site is built by C499, C565, and C568.

The protein belongs to the aconitase/IPM isomerase family. Monomer. The cofactor is [4Fe-4S] cluster.

It catalyses the reaction citrate = D-threo-isocitrate. It carries out the reaction (2S,3R)-3-hydroxybutane-1,2,3-tricarboxylate = 2-methyl-cis-aconitate + H2O. It functions in the pathway carbohydrate metabolism; tricarboxylic acid cycle; isocitrate from oxaloacetate: step 2/2. The protein operates within organic acid metabolism; propanoate degradation. Its function is as follows. Involved in the catabolism of short chain fatty acids (SCFA) via the tricarboxylic acid (TCA)(acetyl degradation route) and probably via the 2-methylcitrate cycle I (propionate degradation route). Catalyzes the reversible isomerization of citrate to isocitrate via cis-aconitate. The apo form of AcnA functions as a RNA-binding regulatory protein. Could catalyze the hydration of 2-methyl-cis-aconitate to yield (2R,3S)-2-methylisocitrate. In Mycobacterium avium, this protein is Aconitate hydratase A (acn).